The primary structure comprises 262 residues: Shikimate dehydrogenase (NADP(+)) (262 aa).

Shikimate-binding positions include 15–17 (SRS) and Thr62. Residue Lys66 is the Proton acceptor of the active site. Glu78 provides a ligand contact to NADP(+). Shikimate contacts are provided by Asn87 and Asp102. Residues 126 to 130 (GAGGA), 150 to 155 (NRTQQR), and Met214 each bind NADP(+). Tyr216 contributes to the shikimate binding site. Gly236 is a binding site for NADP(+).

It belongs to the shikimate dehydrogenase family. In terms of assembly, homodimer.

The enzyme catalyses shikimate + NADP(+) = 3-dehydroshikimate + NADPH + H(+). It functions in the pathway metabolic intermediate biosynthesis; chorismate biosynthesis; chorismate from D-erythrose 4-phosphate and phosphoenolpyruvate: step 4/7. In terms of biological role, involved in the biosynthesis of the chorismate, which leads to the biosynthesis of aromatic amino acids. Catalyzes the reversible NADPH linked reduction of 3-dehydroshikimate (DHSA) to yield shikimate (SA). The sequence is that of Shikimate dehydrogenase (NADP(+)) from Acinetobacter baylyi (strain ATCC 33305 / BD413 / ADP1).